The chain runs to 244 residues: Large ribosomal subunit protein uL2 (244 aa).

The span at 1–12 (MGKRILVQRRGR) shows a compositional bias: basic residues. Disordered regions lie at residues 1-26 (MGKR…KRDG) and 193-225 (AMSP…KVGF).

Belongs to the universal ribosomal protein uL2 family. Part of the 50S ribosomal subunit. Forms a bridge to the 30S subunit in the 70S ribosome.

Functionally, one of the primary rRNA binding proteins. Required for association of the 30S and 50S subunits to form the 70S ribosome, for tRNA binding and peptide bond formation. It has been suggested to have peptidyltransferase activity; this is somewhat controversial. Makes several contacts with the 16S rRNA in the 70S ribosome. The sequence is that of Large ribosomal subunit protein uL2 from Pyrobaculum calidifontis (strain DSM 21063 / JCM 11548 / VA1).